Reading from the N-terminus, the 364-residue chain is Nucleosome assembly protein 1;2 (364 aa).

Residues 32 to 86 (VESIKNTLQGLAARHTDVLESLEPKVRKRVEVLREIQSQHDDLEAKFFEERAALE) are a coiled coil. The short motif at 53-68 (LEPKVRKRVEVLREIQ) is the Nuclear export signal element. Positions 227–232 (KKKPKK) match the Nuclear localization signal motif. Disordered regions lie at residues 250 to 269 (FNFF…DEDT) and 301 to 364 (GEAA…CKQQ). 2 stretches are compositionally biased toward acidic residues: residues 259–269 (PDDDEEIDEDT) and 304–340 (AQDE…DDED). The residue at position 361 (C361) is a Cysteine methyl ester. C361 carries S-farnesyl cysteine lipidation. Residues 362-364 (KQQ) constitute a propeptide, removed in mature form.

Belongs to the nucleosome assembly protein (NAP) family. As to quaternary structure, binds preferentially histone H1 in vitro. Highly expressed in tissues exhibiting active cell-division activities, such as root and shoot meristems and young flowers.

The protein resides in the nucleus. It is found in the cytoplasm. Its function is as follows. May modulate chromatin structure by regulation of nucleosome assembly/disassembly. This is Nucleosome assembly protein 1;2 (NAP1;2) from Oryza sativa subsp. indica (Rice).